The chain runs to 247 residues: Type III pantothenate kinase (247 aa).

Asp6–Thr13 lines the ATP pocket. Substrate is bound at residue Gly101–Arg104. Asp103 serves as the catalytic Proton acceptor. K(+) is bound at residue Asp123. ATP is bound at residue Thr126. Residue Thr177 coordinates substrate.

It belongs to the type III pantothenate kinase family. As to quaternary structure, homodimer. NH4(+) serves as cofactor. It depends on K(+) as a cofactor.

Its subcellular location is the cytoplasm. It carries out the reaction (R)-pantothenate + ATP = (R)-4'-phosphopantothenate + ADP + H(+). It functions in the pathway cofactor biosynthesis; coenzyme A biosynthesis; CoA from (R)-pantothenate: step 1/5. Catalyzes the phosphorylation of pantothenate (Pan), the first step in CoA biosynthesis. In Thermosipho melanesiensis (strain DSM 12029 / CIP 104789 / BI429), this protein is Type III pantothenate kinase.